The sequence spans 159 residues: NADH-quinone oxidoreductase subunit B (159 aa).

Residues C36, C37, C102, and C132 each contribute to the [4Fe-4S] cluster site.

This sequence belongs to the complex I 20 kDa subunit family. In terms of assembly, NDH-1 is composed of 14 different subunits. Subunits NuoB, C, D, E, F, and G constitute the peripheral sector of the complex. Requires [4Fe-4S] cluster as cofactor.

Its subcellular location is the cell inner membrane. It carries out the reaction a quinone + NADH + 5 H(+)(in) = a quinol + NAD(+) + 4 H(+)(out). Its function is as follows. NDH-1 shuttles electrons from NADH, via FMN and iron-sulfur (Fe-S) centers, to quinones in the respiratory chain. Couples the redox reaction to proton translocation (for every two electrons transferred, four hydrogen ions are translocated across the cytoplasmic membrane), and thus conserves the redox energy in a proton gradient. The chain is NADH-quinone oxidoreductase subunit B from Albidiferax ferrireducens (strain ATCC BAA-621 / DSM 15236 / T118) (Rhodoferax ferrireducens).